Consider the following 349-residue polypeptide: Sphingomyelinase D (349 aa).

A signal peptide spans 1–18; it reads MLLSSLISLALLSSQVVA. The active site involves His52. Glu72, Asp74, and Asp123 together coordinate Mg(2+). The SMD-tail motif lies at 310–317; that stretch reads ATNDNNPW.

This sequence belongs to the sphingomyelinase D/phospholipase D family. Mg(2+) serves as cofactor.

It localises to the secreted. It carries out the reaction a sphingomyelin + H2O = an N-acylsphing-4-enine 1-phosphate + choline + H(+). Catalyzes the hydrolysis of sphingomyelin. Sphingomyelinases D are produced by some spider in their venoms, but also by arthropods such as ticks, or pathogenic bacteria and fungi. They might play a role in pathogenicity through different mechanisms, such as membrane destabilization and host cell penetration, but also pulmonary inflammation and cutaneous lesions. The sequence is that of Sphingomyelinase D from Uncinocarpus reesii (strain UAMH 1704).